The chain runs to 120 residues: Small ribosomal subunit protein uS13m (120 aa).

The protein belongs to the universal ribosomal protein uS13 family. Part of the small ribosomal subunit.

Its subcellular location is the mitochondrion. Its function is as follows. Located at the top of the head of the small subunit, it contacts several helices of the 18S rRNA. The polypeptide is Small ribosomal subunit protein uS13m (RPS13) (Marchantia polymorpha (Common liverwort)).